Reading from the N-terminus, the 122-residue chain is S-adenosylmethionine decarboxylase proenzyme (122 aa).

S61 serves as the catalytic Schiff-base intermediate with substrate; via pyruvic acid. Position 61 is a pyruvic acid (Ser); by autocatalysis (S61). H66 functions as the Proton acceptor; for processing activity in the catalytic mechanism. C81 functions as the Proton donor; for catalytic activity in the catalytic mechanism.

The protein belongs to the prokaryotic AdoMetDC family. Type 1 subfamily. As to quaternary structure, heterotetramer of two alpha and two beta chains arranged as a dimer of alpha/beta heterodimers. Pyruvate is required as a cofactor. In terms of processing, is synthesized initially as an inactive proenzyme. Formation of the active enzyme involves a self-maturation process in which the active site pyruvoyl group is generated from an internal serine residue via an autocatalytic post-translational modification. Two non-identical subunits are generated from the proenzyme in this reaction, and the pyruvate is formed at the N-terminus of the alpha chain, which is derived from the carboxyl end of the proenzyme. The post-translation cleavage follows an unusual pathway, termed non-hydrolytic serinolysis, in which the side chain hydroxyl group of the serine supplies its oxygen atom to form the C-terminus of the beta chain, while the remainder of the serine residue undergoes an oxidative deamination to produce ammonia and the pyruvoyl group blocking the N-terminus of the alpha chain.

It carries out the reaction S-adenosyl-L-methionine + H(+) = S-adenosyl 3-(methylsulfanyl)propylamine + CO2. It functions in the pathway amine and polyamine biosynthesis; S-adenosylmethioninamine biosynthesis; S-adenosylmethioninamine from S-adenosyl-L-methionine: step 1/1. Functionally, catalyzes the decarboxylation of S-adenosylmethionine to S-adenosylmethioninamine (dcAdoMet), the propylamine donor required for the synthesis of the polyamines spermine and spermidine from the diamine putrescine. The sequence is that of S-adenosylmethionine decarboxylase proenzyme from Prochlorococcus marinus (strain MIT 9211).